The following is a 554-amino-acid chain: Potassium-transporting ATPase potassium-binding subunit (554 aa).

The next 12 helical transmembrane spans lie at 1–21 (MSSQ…LALA), 59–79 (WPAY…FLYL), 131–151 (GLAV…VALV), 174–194 (VRIL…AGAI), 246–266 (PNPL…FALT), 279–299 (GYAI…LMMW), 323–343 (FGIA…TGAV), 352–372 (GFGG…PGGV), 375–395 (GLYG…LMVG), 412–432 (FAAC…AVAM), 481–501 (IGIA…ALAG), and 525–545 (GLLV…ALAL).

Belongs to the KdpA family. In terms of assembly, the system is composed of three essential subunits: KdpA, KdpB and KdpC.

It is found in the cell membrane. In terms of biological role, part of the high-affinity ATP-driven potassium transport (or Kdp) system, which catalyzes the hydrolysis of ATP coupled with the electrogenic transport of potassium into the cytoplasm. This subunit binds the extracellular potassium ions and delivers the ions to the membrane domain of KdpB through an intramembrane tunnel. The chain is Potassium-transporting ATPase potassium-binding subunit from Streptomyces griseus subsp. griseus (strain JCM 4626 / CBS 651.72 / NBRC 13350 / KCC S-0626 / ISP 5235).